The sequence spans 393 residues: Putative B3 domain-containing protein Os06g0632500 (393 aa).

3 DNA-binding regions (TF-B3) span residues 27–123 (LSVP…FDPG), 141–238 (RPRF…FLQN), and 316–393 (NSFT…VQRR).

The protein resides in the nucleus. The polypeptide is Putative B3 domain-containing protein Os06g0632500 (Oryza sativa subsp. japonica (Rice)).